A 95-amino-acid chain; its full sequence is Co-chaperonin GroES (95 aa).

This sequence belongs to the GroES chaperonin family. Heptamer of 7 subunits arranged in a ring. Interacts with the chaperonin GroEL.

The protein resides in the cytoplasm. In terms of biological role, together with the chaperonin GroEL, plays an essential role in assisting protein folding. The GroEL-GroES system forms a nano-cage that allows encapsulation of the non-native substrate proteins and provides a physical environment optimized to promote and accelerate protein folding. GroES binds to the apical surface of the GroEL ring, thereby capping the opening of the GroEL channel. This Bordetella avium (strain 197N) protein is Co-chaperonin GroES.